The primary structure comprises 189 residues: ECF RNA polymerase sigma-E factor (189 aa).

The binds RNAP core stretch occupies residues 1–153 (MAEQLTDQAL…TAITLRELEG (153 aa)). The segment at 25 to 92 (LVSRYQNKVA…KNYLTAQGRR (68 aa)) is sigma-70 factor domain-2. The Polymerase core binding motif lies at 48-61 (DVVQESFIKAYRSI). The segment at 129-180 (RIVFDTIHNLPEDLKTAITLRELEGLSYEDIAEIMDCPVGTVRSRIFRAREM) is sigma-70 factor domain-4. Positions 156–175 (YEDIAEIMDCPVGTVRSRIF) form a DNA-binding region, H-T-H motif.

The protein belongs to the sigma-70 factor family. ECF subfamily. In terms of assembly, interacts transiently with the RNAP catalytic core formed by RpoA, RpoB, RpoC and RpoZ (2 alpha, 1 beta, 1 beta' and 1 omega subunit) to form the RNAP holoenzyme that can initiate transcription. Interacts 1:1 with anti-sigma-E factor RseA which prevents binding to RNAP catalytic core.

Its subcellular location is the cytoplasm. With respect to regulation, ECF sigma-E is held in an inactive form by its cognate anti-sigma factor (RseA) until released by regulated intramembrane proteolysis (RIP). RIP occurs when an extracytoplasmic signal (periplasmic stress and excess LPS) triggers a concerted proteolytic cascade to transmit information and elicit cellular responses. The anti-sigma factor RseA is an inner membrane protein, binding sigma-E in the cytoplasm and RseB in the periplasm. RseA is first cut extracytoplasmically (site-1 protease, S1P, by DegS), then within the membrane itself (site-2 protease, S2P, by RseP), while cytoplasmic proteases (predominantly ClpX-ClpP) finish degrading the regulatory protein, liberating sigma-E. Degradation of RseA requires 2 signals to activate DegS; an outer membrane protein (OMP) signal activates DegS, while an LPS signal causes release of RseB from RseA, freeing RseA to be cleaved. Functionally, sigma factors are initiation factors that promote the attachment of RNA polymerase (RNAP) to specific initiation sites and are then released. Extracytoplasmic function (ECF) sigma-E controls the envelope stress response, responding to periplasmic protein stress, increased levels of periplasmic lipopolysaccharide (LPS) as well as heat shock and oxidative stress; it controls protein processing in the extracytoplasmic compartment. The chain is ECF RNA polymerase sigma-E factor (rpoE) from Haemophilus influenzae (strain ATCC 51907 / DSM 11121 / KW20 / Rd).